Consider the following 182-residue polypeptide: dCTP deaminase, dUMP-forming (182 aa).

DCTP contacts are provided by residues 96-101 (RSSIGR), D113, 121-123 (TLE), Q142, Y156, and Q163. Residue E123 is the Proton donor/acceptor of the active site.

The protein belongs to the dCTP deaminase family. In terms of assembly, homotrimer.

It catalyses the reaction dCTP + 2 H2O = dUMP + NH4(+) + diphosphate. It participates in pyrimidine metabolism; dUMP biosynthesis; dUMP from dCTP: step 1/1. Functionally, bifunctional enzyme that catalyzes both the deamination of dCTP to dUTP and the hydrolysis of dUTP to dUMP without releasing the toxic dUTP intermediate. In Halothermothrix orenii (strain H 168 / OCM 544 / DSM 9562), this protein is dCTP deaminase, dUMP-forming.